The sequence spans 485 residues: Cytoplasmic tRNA 2-thiolation protein 2 (485 aa).

Belongs to the CTU2/NCS2 family.

The protein resides in the cytoplasm. Its pathway is tRNA modification; 5-methoxycarbonylmethyl-2-thiouridine-tRNA biosynthesis. Plays a central role in 2-thiolation of mcm(5)S(2)U at tRNA wobble positions of tRNA(Lys), tRNA(Glu) and tRNA(Gln). May act by forming a heterodimer with NCS6 that ligates sulfur from thiocarboxylated URM1 onto the uridine of tRNAs at wobble position. Prior mcm(5) tRNA modification by the elongator complex is required for 2-thiolation. May also be involved in protein urmylation. This chain is Cytoplasmic tRNA 2-thiolation protein 2, found in Vanderwaltozyma polyspora (strain ATCC 22028 / DSM 70294 / BCRC 21397 / CBS 2163 / NBRC 10782 / NRRL Y-8283 / UCD 57-17) (Kluyveromyces polysporus).